The chain runs to 511 residues: Histidine ammonia-lyase (511 aa).

A cross-link (5-imidazolinone (Ala-Gly)) is located at residues 142–144 (ASG). Position 143 is a 2,3-didehydroalanine (Ser) (Ser143).

Belongs to the PAL/histidase family. Contains an active site 4-methylidene-imidazol-5-one (MIO), which is formed autocatalytically by cyclization and dehydration of residues Ala-Ser-Gly.

The protein resides in the cytoplasm. The enzyme catalyses L-histidine = trans-urocanate + NH4(+). Its pathway is amino-acid degradation; L-histidine degradation into L-glutamate; N-formimidoyl-L-glutamate from L-histidine: step 1/3. The protein is Histidine ammonia-lyase of Brucella abortus (strain S19).